We begin with the raw amino-acid sequence, 310 residues long: 4-hydroxythreonine-4-phosphate dehydrogenase (310 aa).

The substrate site is built by histidine 126 and threonine 127. The a divalent metal cation site is built by histidine 156, histidine 195, and histidine 251. 3 residues coordinate substrate: lysine 259, asparagine 268, and arginine 277.

It belongs to the PdxA family. In terms of assembly, homodimer. Requires Zn(2+) as cofactor. The cofactor is Mg(2+). Co(2+) serves as cofactor.

The protein localises to the cytoplasm. The catalysed reaction is 4-(phosphooxy)-L-threonine + NAD(+) = 3-amino-2-oxopropyl phosphate + CO2 + NADH. The protein operates within cofactor biosynthesis; pyridoxine 5'-phosphate biosynthesis; pyridoxine 5'-phosphate from D-erythrose 4-phosphate: step 4/5. Catalyzes the NAD(P)-dependent oxidation of 4-(phosphooxy)-L-threonine (HTP) into 2-amino-3-oxo-4-(phosphooxy)butyric acid which spontaneously decarboxylates to form 3-amino-2-oxopropyl phosphate (AHAP). The sequence is that of 4-hydroxythreonine-4-phosphate dehydrogenase from Helicobacter acinonychis (strain Sheeba).